Consider the following 64-residue polypeptide: Large ribosomal subunit protein bL35 (64 aa).

It belongs to the bacterial ribosomal protein bL35 family.

The polypeptide is Large ribosomal subunit protein bL35 (Streptomyces coelicolor (strain ATCC BAA-471 / A3(2) / M145)).